Consider the following 774-residue polypeptide: C6 finger domain transcription factor nscR (774 aa).

The segment at residues 17 to 43 (CELCRERKIKCDKVDPCNNCVSAGVVC) is a DNA-binding region (zn(2)-C6 fungal-type). Disordered regions lie at residues 61 to 94 (RPMS…SGAV), 536 to 559 (LQLP…PQEH), and 665 to 697 (PTFS…SDLS). Over residues 67-78 (FVPPRAPTPVAG) the composition is skewed to pro residues. Low complexity predominate over residues 536 to 548 (LQLPQPSNGSSQP). Positions 665–674 (PTFSLGSSTG) are enriched in polar residues. Low complexity predominate over residues 675-697 (TSAAPTPRSRASSTPSDTLSDLS).

It is found in the nucleus. In terms of biological role, transcription factor that specifically regulates the neosartoricin biosynthesis gene cluster. The protein is C6 finger domain transcription factor nscR of Aspergillus fumigatus (strain ATCC MYA-4609 / CBS 101355 / FGSC A1100 / Af293) (Neosartorya fumigata).